Reading from the N-terminus, the 234-residue chain is Large ribosomal subunit protein uL1 (234 aa).

Belongs to the universal ribosomal protein uL1 family. As to quaternary structure, part of the 50S ribosomal subunit.

In terms of biological role, binds directly to 23S rRNA. The L1 stalk is quite mobile in the ribosome, and is involved in E site tRNA release. Functionally, protein L1 is also a translational repressor protein, it controls the translation of the L11 operon by binding to its mRNA. The sequence is that of Large ribosomal subunit protein uL1 from Prochlorococcus marinus (strain MIT 9211).